Here is a 375-residue protein sequence, read N- to C-terminus: POU domain, class 3, transcription factor 1 (375 aa).

3 disordered regions span residues M1 to Q29, M56 to I139, and M151 to D200. 3 stretches are compositionally biased toward polar residues: residues V107 to W117, P130 to I139, and M151 to H160. The segment covering S162–P171 has biased composition (basic and acidic residues). Positions E194–D268 constitute a POU-specific domain. Positions K286–T345 form a DNA-binding region, homeobox.

Belongs to the POU transcription factor family. Class-3 subfamily.

The protein localises to the nucleus. Its function is as follows. Acts as a transcription factor. May play a role in neuronal differentiation. The sequence is that of POU domain, class 3, transcription factor 1 from Xenopus tropicalis (Western clawed frog).